The sequence spans 175 residues: Large ribosomal subunit protein uL10 (175 aa).

It belongs to the universal ribosomal protein uL10 family. In terms of assembly, part of the ribosomal stalk of the 50S ribosomal subunit. The N-terminus interacts with L11 and the large rRNA to form the base of the stalk. The C-terminus forms an elongated spine to which L12 dimers bind in a sequential fashion forming a multimeric L10(L12)X complex.

In terms of biological role, forms part of the ribosomal stalk, playing a central role in the interaction of the ribosome with GTP-bound translation factors. The chain is Large ribosomal subunit protein uL10 from Prochlorococcus marinus (strain MIT 9215).